Consider the following 356-residue polypeptide: Dual-specificity RNA methyltransferase RlmN (356 aa).

Residue Glu89 is the Proton acceptor of the active site. Residues 108–341 (SHARYTICVS…CTIRESKGLD (234 aa)) enclose the Radical SAM core domain. Cys115 and Cys346 are oxidised to a cystine. [4Fe-4S] cluster contacts are provided by Cys122, Cys126, and Cys129. S-adenosyl-L-methionine is bound by residues 172–173 (GE), Ser204, 227–229 (SLH), and Asn303. The active-site S-methylcysteine intermediate is the Cys346.

It belongs to the radical SAM superfamily. RlmN family. The cofactor is [4Fe-4S] cluster.

The protein localises to the cytoplasm. The enzyme catalyses adenosine(2503) in 23S rRNA + 2 reduced [2Fe-2S]-[ferredoxin] + 2 S-adenosyl-L-methionine = 2-methyladenosine(2503) in 23S rRNA + 5'-deoxyadenosine + L-methionine + 2 oxidized [2Fe-2S]-[ferredoxin] + S-adenosyl-L-homocysteine. It carries out the reaction adenosine(37) in tRNA + 2 reduced [2Fe-2S]-[ferredoxin] + 2 S-adenosyl-L-methionine = 2-methyladenosine(37) in tRNA + 5'-deoxyadenosine + L-methionine + 2 oxidized [2Fe-2S]-[ferredoxin] + S-adenosyl-L-homocysteine. Specifically methylates position 2 of adenine 2503 in 23S rRNA and position 2 of adenine 37 in tRNAs. m2A2503 modification seems to play a crucial role in the proofreading step occurring at the peptidyl transferase center and thus would serve to optimize ribosomal fidelity. The sequence is that of Dual-specificity RNA methyltransferase RlmN from Campylobacter jejuni (strain RM1221).